Here is a 382-residue protein sequence, read N- to C-terminus: Lipid-A-disaccharide synthase (382 aa).

This sequence belongs to the LpxB family.

It catalyses the reaction 2-N,3-O-bis[(3R)-3-hydroxytetradecanoyl]-alpha-D-glucosaminyl 1-phosphate + UDP-2-N,3-O-bis[(3R)-3-hydroxytetradecanoyl]-alpha-D-glucosamine = lipid A disaccharide (E. coli) + UDP + H(+). It carries out the reaction a lipid X + a UDP-2-N,3-O-bis[(3R)-3-hydroxyacyl]-alpha-D-glucosamine = a lipid A disaccharide + UDP + H(+). It participates in glycolipid biosynthesis; lipid IV(A) biosynthesis; lipid IV(A) from (3R)-3-hydroxytetradecanoyl-[acyl-carrier-protein] and UDP-N-acetyl-alpha-D-glucosamine: step 5/6. In terms of biological role, condensation of UDP-2,3-diacylglucosamine and 2,3-diacylglucosamine-1-phosphate to form lipid A disaccharide, a precursor of lipid A, a phosphorylated glycolipid that anchors the lipopolysaccharide to the outer membrane of the cell. This is Lipid-A-disaccharide synthase from Shigella boydii serotype 18 (strain CDC 3083-94 / BS512).